The sequence spans 556 residues: Glutamine--tRNA ligase (556 aa).

Residues Pro-39–His-49 carry the 'HIGH' region motif. Residues Glu-40–Asn-42 and His-46–Ser-52 contribute to the ATP site. L-glutamine-binding residues include Asp-72 and Tyr-217. ATP is bound by residues Thr-236 and Arg-267–Leu-268. The 'KMSKS' region signature appears at Leu-274 to Arg-278.

Belongs to the class-I aminoacyl-tRNA synthetase family. Monomer.

The protein resides in the cytoplasm. The catalysed reaction is tRNA(Gln) + L-glutamine + ATP = L-glutaminyl-tRNA(Gln) + AMP + diphosphate. The sequence is that of Glutamine--tRNA ligase from Haemophilus ducreyi (strain 35000HP / ATCC 700724).